Reading from the N-terminus, the 363-residue chain is MAPTPPKDRPNRYTYAQAGVDIDAGNELVRMIGPLAASTKRPGSDAALGGFGGLFDLAACGFKDPVLVAANDGVGTKLKVAIEADRHDTVGIDLVAMSVNDLVVQGAEPLFFLDYYATGKLHVDVARDVVAGIAEGCRQAGCALIGGETAEMPGMYAKGDYDLAGFAVGAVERDGVLPRGDVAPGDVLLGLASSGFHSNGFSLVRRIVEDNRISYSAPFPGGDGASIGEVLLAPTRIYVKAMLKTIRETAAVKAVAHITGGGFVENIPRVLPEGINVEIDGASWTMPPVFRWLMELGGIDDTEMGRTFNCGIGMVVVVREDQALEVSDALAEAGETVFRIGRLIETVPGAARVAVKGALGSGK.

Belongs to the AIR synthase family.

The protein resides in the cytoplasm. The catalysed reaction is 2-formamido-N(1)-(5-O-phospho-beta-D-ribosyl)acetamidine + ATP = 5-amino-1-(5-phospho-beta-D-ribosyl)imidazole + ADP + phosphate + H(+). The protein operates within purine metabolism; IMP biosynthesis via de novo pathway; 5-amino-1-(5-phospho-D-ribosyl)imidazole from N(2)-formyl-N(1)-(5-phospho-D-ribosyl)glycinamide: step 2/2. The protein is Phosphoribosylformylglycinamidine cyclo-ligase of Parvibaculum lavamentivorans (strain DS-1 / DSM 13023 / NCIMB 13966).